We begin with the raw amino-acid sequence, 156 residues long: Small ribosomal subunit protein uS7 (156 aa).

This sequence belongs to the universal ribosomal protein uS7 family. Part of the 30S ribosomal subunit. Contacts proteins S9 and S11.

Its function is as follows. One of the primary rRNA binding proteins, it binds directly to 16S rRNA where it nucleates assembly of the head domain of the 30S subunit. Is located at the subunit interface close to the decoding center, probably blocks exit of the E-site tRNA. The chain is Small ribosomal subunit protein uS7 from Baumannia cicadellinicola subsp. Homalodisca coagulata.